Consider the following 182-residue polypeptide: MEIKFTIKQVVAVGIGAALFVVIGMINIPTPVPNTSIQLQYAVQALLSIIFGPIIGLLVGLIGHAIKDSLAGYGLWWTWIIASGLFGLVVGLFRKYVRVINGVFDWKDILIFNLIQLLANALVWGVLAPLGDVVIYQEAAEKVFAQGIVAGIANGVSVAIAGTLLLLAYAGTQTRAGSLKKD.

5 helical membrane passes run 10–30 (VVAV…NIPT), 46–66 (LLSI…GHAI), 73–93 (YGLW…VGLF), 109–129 (ILIF…VLAP), and 148–168 (IVAG…LLLA).

The protein belongs to the UPF0397 family.

It localises to the cell membrane. The polypeptide is UPF0397 protein SPP_0507 (Streptococcus pneumoniae (strain P1031)).